We begin with the raw amino-acid sequence, 398 residues long: Lysophospholipid transporter LplT (398 aa).

Transmembrane regions (helical) follow at residues V19–A39, V53–A73, I96–Y116, L139–A159, I164–I184, S195–W213, L227–L247, Y257–V277, T281–L301, A304–V324, N352–A372, and V373–W393.

It belongs to the major facilitator superfamily. LplT (TC 2.A.1.42) family.

Its subcellular location is the cell inner membrane. In terms of biological role, catalyzes the facilitated diffusion of 2-acyl-glycero-3-phosphoethanolamine (2-acyl-GPE) into the cell. The sequence is that of Lysophospholipid transporter LplT from Salmonella arizonae (strain ATCC BAA-731 / CDC346-86 / RSK2980).